The following is a 185-amino-acid chain: Ribosome-recycling factor (185 aa).

Belongs to the RRF family.

The protein localises to the cytoplasm. In terms of biological role, responsible for the release of ribosomes from messenger RNA at the termination of protein biosynthesis. May increase the efficiency of translation by recycling ribosomes from one round of translation to another. The protein is Ribosome-recycling factor of Shewanella amazonensis (strain ATCC BAA-1098 / SB2B).